We begin with the raw amino-acid sequence, 310 residues long: Olfactory receptor 5AR1 (310 aa).

Residues 1 to 28 (MDKENSSMVTEFIFMGITQDPQMEIIFF) are Extracellular-facing. The N-linked (GlcNAc...) asparagine glycan is linked to Asn-5. The chain crosses the membrane as a helical span at residues 29–49 (VVFLIVYLVNVVGNIGMIILI). The Cytoplasmic portion of the chain corresponds to 50-58 (TTDTQLHTP). The helical transmembrane segment at 59 to 79 (MYFFLCNLSFVDLGYSSAIAP) threads the bilayer. The Extracellular segment spans residues 80–100 (RMLADFLTNHKVISFSSCATQ). A disulfide bridge connects residues Cys-97 and Cys-189. The helical transmembrane segment at 101–120 (FAFFVGFVDAECYVLAAMAY) threads the bilayer. Topologically, residues 121–139 (GRFVAICRPLHYSTFMSKQ) are cytoplasmic. A helical transmembrane segment spans residues 140–160 (VCLALMLGSYLAGLVSLVAHT). Over 161–205 (TLTFSLSYCGSNIINHFFCEIPPLLALSCSDTYISEILLFSLCGF) the chain is Extracellular. A helical membrane pass occupies residues 206 to 226 (IEFSTILIIFISYTFILVAII). The Cytoplasmic segment spans residues 227 to 239 (RMRSAEGRLKAFS). The helical transmembrane segment at 240–260 (TCGSHLTGITLFYGTVMFMYL) threads the bilayer. Over 261–271 (RPTSSYSLDQD) the chain is Extracellular. The helical transmembrane segment at 272–292 (KWASVFYTVIIPMLNPLIYSL) threads the bilayer. At 293–310 (RNKDVKAAFKKLIGKKSQ) the chain is on the cytoplasmic side.

This sequence belongs to the G-protein coupled receptor 1 family.

The protein resides in the cell membrane. Its function is as follows. Odorant receptor. This is Olfactory receptor 5AR1 from Homo sapiens (Human).